Consider the following 379-residue polypeptide: Chaperone protein DnaJ (379 aa).

The J domain occupies 5–70 (DYYEVLGVQK…QKRAAYDRFG (66 aa)). The CR-type zinc-finger motif lies at 137-215 (GATTTVRVPT…CGGQGRVRKE (79 aa)). Zn(2+) contacts are provided by Cys150, Cys153, Cys167, Cys170, Cys189, Cys192, Cys203, and Cys206. 4 CXXCXGXG motif repeats span residues 150–157 (CESCNGTG), 167–174 (CPTCNGHG), 189–196 (CPACHGVG), and 203–210 (CRTCGGQG).

It belongs to the DnaJ family. In terms of assembly, homodimer. Zn(2+) is required as a cofactor.

The protein localises to the cytoplasm. In terms of biological role, participates actively in the response to hyperosmotic and heat shock by preventing the aggregation of stress-denatured proteins and by disaggregating proteins, also in an autonomous, DnaK-independent fashion. Unfolded proteins bind initially to DnaJ; upon interaction with the DnaJ-bound protein, DnaK hydrolyzes its bound ATP, resulting in the formation of a stable complex. GrpE releases ADP from DnaK; ATP binding to DnaK triggers the release of the substrate protein, thus completing the reaction cycle. Several rounds of ATP-dependent interactions between DnaJ, DnaK and GrpE are required for fully efficient folding. Also involved, together with DnaK and GrpE, in the DNA replication of plasmids through activation of initiation proteins. In Rhodospirillum centenum (strain ATCC 51521 / SW), this protein is Chaperone protein DnaJ.